A 123-amino-acid polypeptide reads, in one-letter code: Fluoride-specific ion channel FluC (123 aa).

A run of 4 helical transmembrane segments spans residues 4-24, 31-51, 64-83, and 100-120; these read VYIAIFGALGCLSRFMVSGWV, ALPYGTLAVNVIGSLLLGLLM, IRMGITTGFMGGFTTFSTFS, and ANILLNVTVSVVFAGLGIFLA. 2 residues coordinate Na(+): G74 and T77.

The protein belongs to the fluoride channel Fluc/FEX (TC 1.A.43) family.

It is found in the cell inner membrane. It carries out the reaction fluoride(in) = fluoride(out). Na(+) is not transported, but it plays an essential structural role and its presence is essential for fluoride channel function. Fluoride-specific ion channel. Important for reducing fluoride concentration in the cell, thus reducing its toxicity. This Syntrophotalea carbinolica (strain DSM 2380 / NBRC 103641 / GraBd1) (Pelobacter carbinolicus) protein is Fluoride-specific ion channel FluC.